A 238-amino-acid polypeptide reads, in one-letter code: uncharacterized protein (238 aa).

7 consecutive transmembrane segments (helical) span residues 15 to 37, 50 to 69, 79 to 96, 101 to 118, 128 to 150, 163 to 183, and 203 to 225; these read FGAL…VLLP, ARAG…CGTL, LPFH…LYFI, IFFN…VAVL, ILYA…FSLL, CAVL…RRLG, and FFVY…YLPF.

The protein resides in the cell membrane. This is an uncharacterized protein from Treponema pallidum (strain Nichols).